We begin with the raw amino-acid sequence, 24 residues long: Potassium channel toxin alpha-KTx 6 OcyKTx5 (24 aa).

A disulfide bridge connects residues C3 and C24.

Belongs to the short scorpion toxin superfamily. Potassium channel inhibitor family. Alpha-KTx 06 subfamily. In terms of tissue distribution, expressed by the venom gland.

It localises to the secreted. Its function is as follows. Blocks voltage-gated potassium channels. In Opisthacanthus cayaporum (South American scorpion), this protein is Potassium channel toxin alpha-KTx 6 OcyKTx5.